The following is a 340-amino-acid chain: Guanine nucleotide-binding protein subunit beta-1 (340 aa).

S29 is subject to Phosphoserine. 7 WD repeats span residues 53–92, 95–134, 141–179, 182–221, 224–263, 268–307, and 310–340; these read GHLA…KVHA, LRSS…GNVR, GHGG…QVTS, GHTG…CKQT, GHES…ELAM, NIIC…RSGI, and GHDN…RVWN.

The protein belongs to the WD repeat G protein beta family. In terms of assembly, g proteins are composed of 3 units, alpha, beta and gamma. As to expression, expressed in the brain neuropil and cortex, and the thoracic ganglion (at protein level). Expression detected in eye at protein level but not at mRNA level, suggesting cross reactivity of antibodies to the similar Gbeta76C protein.

Functionally, guanine nucleotide-binding proteins (G proteins) are involved as a modulator or transducer in various transmembrane signaling systems. The beta and gamma chains are required for the GTPase activity, for replacement of GDP by GTP, and for G protein-effector interaction. This Drosophila melanogaster (Fruit fly) protein is Guanine nucleotide-binding protein subunit beta-1 (Gbeta13F).